A 144-amino-acid polypeptide reads, in one-letter code: Small ribosomal subunit protein uS9 (144 aa).

Residue Thr2 is modified to N-acetylthreonine. The disordered stretch occupies residues 124–144; that stretch reads RRESKKFGGPGARARYQKSYR.

Belongs to the universal ribosomal protein uS9 family.

The chain is Small ribosomal subunit protein uS9 (rps-16) from Caenorhabditis elegans.